A 332-amino-acid chain; its full sequence is Processive diacylglycerol alpha-glucosyltransferase (332 aa).

It belongs to the glycosyltransferase group 1 family. Glycosyltransferase 4 subfamily. Mg(2+) is required as a cofactor.

It localises to the cell membrane. It carries out the reaction a 1,2-diacyl-sn-glycerol + UDP-alpha-D-glucose = a 1,2-diacyl-3-O-(alpha-D-glucopyranosyl)-sn-glycerol + UDP + H(+). The catalysed reaction is a 1,2-diacyl-3-O-(alpha-D-glucopyranosyl)-sn-glycerol + UDP-alpha-D-glucose = a 1,2-diacyl-3-O-[alpha-D-glucosyl-(1-&gt; 2)-alpha-D-glucosyl]-sn-glycerol + UDP + H(+). Its pathway is glycolipid metabolism; diglucosyl-diacylglycerol biosynthesis. Activated by the negatively charged lipids phosphatidylglycerol (PG), cardiolipin (CL), nonbilayer-prone 1,3-DAG, 1,2-dioleoylphosphatidylglycerol (DOPG) and 1,2-dioleoylphosphatidylserine (DOPS). Inhibited by 1,2-diacyl-3-O-(alpha-D-galactopyranosyl)-sn-glycerol, 1,2-diacyl-3-O-[6-O-acyl(alpha-D-glucopyranosyl)]-sn-glycerol and 1,2-diacyl-3-O-[alpha-D-glucopyranosyl-(1-&gt;2)-O-(6-O-acyl-alpha-D-glucopyranosyl)]-sn-glycerol. Processive glucosyltransferase involved in the biosynthesis of both the non-bilayer-prone alpha-monoglucosyldiacylglycerol and the bilayer-forming membrane lipid alpha-diglucosyldiacylglycerol. These are major components for maintaining the anionic lipid surface charge density, for balancing the bilayer to non-bilayer phase equilibria and for keeping a constant lipid bilayer spontaneous curvature (curvature packing stress). Catalyzes the transfer of a glucosyl residue from UDP-Glc to diacylglycerol (DAG) acceptor to form the corresponding alpha-glucosyl-DAG (1,2-diacyl-3-O-(alpha-D-glucopyranosyl)-sn-glycerol), which then acts as acceptor to give alpha-diglucosyl-DAG product (3-O-(alpha-D-glucopyranosyl-alpha-(1-&gt;2)-D-glucopyranosyl)-1,2-diacyl-sn-glycerol). It can only use UDP-Glc as sugar donor. This is Processive diacylglycerol alpha-glucosyltransferase (dgs) from Acholeplasma laidlawii.